We begin with the raw amino-acid sequence, 577 residues long: E3 ubiquitin-protein ligase MSL2 (577 aa).

A sufficient for interaction with MSL1 region spans residues 1–116 (MNPVNATALY…CEYITQTTLA (116 aa)). Residues Cys44, Cys47, Cys62, His64, Cys67, Cys70, Cys81, and Cys84 each coordinate Zn(2+). The RING-type zinc-finger motif lies at 44 to 85 (CCVCGHLLQDPIAPTNSTCQHYVCKTCKGKKMMMKPSCSWCK). Lys375 is covalently cross-linked (Glycyl lysine isopeptide (Lys-Gly) (interchain with G-Cter in SUMO2)). Residues 405 to 427 (TKSMKKSHEHGSKKSHSKTKPGI) are disordered. Residues 407 to 423 (SMKKSHEHGSKKSHSKT) are compositionally biased toward basic residues. Ser447 is subject to Phosphoserine. The CXC MSL2-type domain maps to 457-508 (QEKKGCKCGRATQNPSVLTCRGQRCPCYSNRKACLDCICRGCQNSYMANGEK). The Zn(2+) site is built by Cys462, Cys464, Cys476, Cys481, Cys483, Cys490, Cys493, Cys495, and Cys498.

It belongs to the MSL2 family. In terms of assembly, component of a multisubunit histone acetyltransferase complex (MSL) at least composed of the KAT8/MOF/MYST1, MSL1/hampin, MSL2 and MSL3. Forms a MSL heterotetrameric core with MSL1.

The protein localises to the nucleus. It localises to the chromosome. The enzyme catalyses S-ubiquitinyl-[E2 ubiquitin-conjugating enzyme]-L-cysteine + [acceptor protein]-L-lysine = [E2 ubiquitin-conjugating enzyme]-L-cysteine + N(6)-ubiquitinyl-[acceptor protein]-L-lysine.. It participates in protein modification; protein ubiquitination. Non-catalytic component of the MSL histone acetyltransferase complex, a multiprotein complex that mediates the majority of histone H4 acetylation at 'Lys-16' (H4K16ac), an epigenetic mark that prevents chromatin compaction. The MSL complex is required for chromosome stability and genome integrity by maintaining homeostatic levels of H4K16ac. The MSL complex is also involved in gene dosage by promoting up-regulation of genes expressed by the X chromosome. X up-regulation is required to compensate for autosomal biallelic expression. The MSL complex also participates in gene dosage compensation by promoting expression of Tsix non-coding RNA. MSL2 plays a key role in gene dosage by ensuring biallelic expression of a subset of dosage-sensitive genes, including many haploinsufficient genes. Acts by promoting promoter-enhancer contacts, thereby preventing DNA methylation of one allele and creating a methylation-free environment for methylation-sensitive transcription factors such as SP1, KANSL1 and KANSL3. Also acts as an E3 ubiquitin ligase that promotes monoubiquitination of histone H2B at 'Lys-35' (H2BK34Ub), but not that of H2A. This activity is greatly enhanced by heterodimerization with MSL1. H2B ubiquitination in turn stimulates histone H3 methylation at 'Lys-4' (H3K4me) and 'Lys-79' (H3K79me) and leads to gene activation, including that of HOXA9 and MEIS1. Also involved in the DNA damage response by mediating ubiquitination of TP53/p53 and TP53BP1. This chain is E3 ubiquitin-protein ligase MSL2, found in Homo sapiens (Human).